An 84-amino-acid chain; its full sequence is Large ribosomal subunit protein bL27 (84 aa).

Residues 1–11 are compositionally biased toward polar residues; that stretch reads MATTKAGGSTK. A disordered region spans residues 1-20; the sequence is MATTKAGGSTKNGRDSHSKR.

This sequence belongs to the bacterial ribosomal protein bL27 family.

This Mycoplasmopsis synoviae (strain 53) (Mycoplasma synoviae) protein is Large ribosomal subunit protein bL27.